The following is a 532-amino-acid chain: ATP synthase subunit alpha (532 aa).

171–178 (GDRQTGKT) provides a ligand contact to ATP.

This sequence belongs to the ATPase alpha/beta chains family. In terms of assembly, F-type ATPases have 2 components, CF(1) - the catalytic core - and CF(0) - the membrane proton channel. CF(1) has five subunits: alpha(3), beta(3), gamma(1), delta(1), epsilon(1). CF(0) has three main subunits: a(1), b(2) and c(9-12). The alpha and beta chains form an alternating ring which encloses part of the gamma chain. CF(1) is attached to CF(0) by a central stalk formed by the gamma and epsilon chains, while a peripheral stalk is formed by the delta and b chains.

It is found in the cell membrane. The catalysed reaction is ATP + H2O + 4 H(+)(in) = ADP + phosphate + 5 H(+)(out). In terms of biological role, produces ATP from ADP in the presence of a proton gradient across the membrane. The alpha chain is a regulatory subunit. This chain is ATP synthase subunit alpha, found in Amoebophilus asiaticus (strain 5a2).